Consider the following 896-residue polypeptide: Zinc finger protein 574 (896 aa).

3 consecutive C2H2-type zinc fingers follow at residues 16-38 (YVCS…QNSH), 76-98 (YQCL…QELH), and 126-148 (YECV…RQTH). The residue at position 164 (Ser-164) is a Phosphoserine. The segment at 214 to 236 (YKCSECSQLFQLPADFLEHQATH) adopts a C2H2-type 4 zinc-finger fold. The span at 259–272 (VEVPVSQPEPVPSS) shows a compositional bias: low complexity. The interval 259–303 (VEVPVSQPEPVPSSDHSYELRNGEALGRDRRGRRARRNNSGEPGG) is disordered. Over residues 274–287 (HSYELRNGEALGRD) the composition is skewed to basic and acidic residues. Ser-298 is modified (phosphoserine). 4 C2H2-type zinc fingers span residues 309–331 (LFCS…LRSH), 336–358 (FKCP…LGDH), 364–386 (FLCV…RRAH), and 392–413 (HSCP…RRTH). Residues 434–460 (FPEPAPAETGEPEAPEPPVAEESSAEP) form a disordered region. 6 C2H2-type zinc fingers span residues 466 to 489 (YRCL…RFVH), 495 to 517 (HKCS…LRTH), 523 to 545 (FPCP…RLTH), 551 to 573 (YRCG…RLVH), 579 to 601 (YRCQ…RYHH), and 607 to 630 (YKCR…LVAH). A C2H2-type 15; degenerate zinc finger spans residues 636 to 659 (HRCSSCGAAFPSSLRLREHRCAAA). Residues 667-689 (FECGTCGKKVGSAARLQAHEAAH) form a C2H2-type 16 zinc finger. The interval 687–733 (AAHAAAGPGEVLAKEPPAPRAPRAARTPITSPTTLGSAAPAAPAAPA) is disordered. The segment covering 707 to 732 (APRAARTPITSPTTLGSAAPAAPAAP) has biased composition (low complexity). Phosphoserine is present on Ser-717. 4 consecutive C2H2-type zinc fingers follow at residues 738–760 (LECS…RRIH), 766–788 (YPCP…RRLH), 794–816 (FACE…RRIH), and 822–844 (YSCP…RKTH). Residue Arg-832 is modified to Asymmetric dimethylarginine.

The protein belongs to the krueppel C2H2-type zinc-finger protein family.

The protein localises to the nucleus. Its function is as follows. May be involved in transcriptional regulation. The polypeptide is Zinc finger protein 574 (ZNF574) (Bos taurus (Bovine)).